Here is a 1108-residue protein sequence, read N- to C-terminus: Probable E3 ubiquitin ligase SUD1 (1108 aa).

A disordered region spans residues 1–60; sequence MEISPADSLSISGAAASEVVSEPSVSSSSSSSSPNQASPNPFSNMDPAVSTATGSRYVDD. The segment covering 10–44 has biased composition (low complexity); sequence SISGAAASEVVSEPSVSSSSSSSSPNQASPNPFSN. The RING-CH-type zinc-finger motif lies at 60 to 121; the sequence is DDEDEEDVCR…EVCKHPFSFS (62 aa). 8 residues coordinate Zn(2+): Cys68, Cys71, Cys85, Cys87, His95, Cys98, Cys111, and Cys114. A run of 2 helical transmembrane segments spans residues 157-177 and 197-217; these read FVLS…WRLA and VILT…FIFL. Basic and acidic residues predominate over residues 237–246; sequence ERDDDVDRNG. Residues 237–273 form a disordered region; the sequence is ERDDDVDRNGARAARRPAGQANRNLAGEGNGEDAGDQ. Residues 286-308 adopt a coiled-coil conformation; sequence ENVLARLDIQAARLEAQVEQMFD. 8 helical membrane passes run 339 to 359, 362 to 382, 462 to 482, 489 to 509, 525 to 545, 572 to 592, 630 to 650, and 669 to 689; these read FTVL…PFTL, IILY…VAAS, AVGY…IALI, PLTV…PSLL, VAFL…WWLD, LVHW…VSLL, VLLS…LPVK, and PFTE…FIIE. The tract at residues 762 to 784 is disordered; sequence PNRSRLRAGNVNTGEEYEDDDEQ. 6 helical membrane passes run 796 to 816, 844 to 864, 894 to 914, 923 to 943, 982 to 1002, and 1017 to 1036; these read IILL…ALIV, YAFV…RYAI, AIWV…LVIV, SPVF…KIWT, EIVF…YVLA, and SAVY…FCFC.

Expressed in cotyledons, leaves, roots, stems, inflorescences and siliques. Expression higher at the top than at the base of the stem.

The protein resides in the membrane. The catalysed reaction is S-ubiquitinyl-[E2 ubiquitin-conjugating enzyme]-L-cysteine + [acceptor protein]-L-lysine = [E2 ubiquitin-conjugating enzyme]-L-cysteine + N(6)-ubiquitinyl-[acceptor protein]-L-lysine.. The protein operates within protein modification; protein ubiquitination. Probable E3 ubiquitin ligase acting as a positive post-transcriptional regulator of 3-hydroxy-3-methylglutaryl-coenzyme A reductase activity. Might be involved in the quality control that degrades misfolded proteins. The chain is Probable E3 ubiquitin ligase SUD1 (SUD1) from Arabidopsis thaliana (Mouse-ear cress).